The following is a 295-amino-acid chain: Protease HtpX (295 aa).

2 helical membrane-spanning segments follow: residues 4–24 (ILLF…TLSL) and 42–62 (QLLV…LFIS). A Zn(2+)-binding site is contributed by His-147. Residue Glu-148 is part of the active site. Position 151 (His-151) interacts with Zn(2+). The next 2 helical transmembrane spans lie at 158-178 (VTLA…ARII) and 199-219 (ITTI…VMWF). Glu-224 is a binding site for Zn(2+).

The protein belongs to the peptidase M48B family. Zn(2+) serves as cofactor.

The protein localises to the cell inner membrane. The chain is Protease HtpX from Pseudomonas syringae pv. syringae (strain B728a).